The chain runs to 275 residues: Large ribosomal subunit protein uL2 (275 aa).

Residues 227 to 261 (PVDHPHGGGEAKSGQGNPHPVTPWGVPTKGYKTRK) are disordered.

Belongs to the universal ribosomal protein uL2 family. In terms of assembly, part of the 50S ribosomal subunit. Forms a bridge to the 30S subunit in the 70S ribosome.

Functionally, one of the primary rRNA binding proteins. Required for association of the 30S and 50S subunits to form the 70S ribosome, for tRNA binding and peptide bond formation. It has been suggested to have peptidyltransferase activity; this is somewhat controversial. Makes several contacts with the 16S rRNA in the 70S ribosome. This chain is Large ribosomal subunit protein uL2, found in Xylella fastidiosa (strain M23).